The following is a 317-amino-acid chain: Zinc finger protein 771 (317 aa).

Residues 1 to 17 are compositionally biased toward acidic residues; it reads MPGEQQAEEEEEEEMQE. The interval 1-63 is disordered; the sequence is MPGEQQAEEE…APSADPARPH (63 aa). A Glycyl lysine isopeptide (Lys-Gly) (interchain with G-Cter in SUMO2) cross-link involves residue K33. A compositionally biased stretch (basic and acidic residues) spans 33–49; the sequence is KYEVVKLKIPMDNKEVP. 8 C2H2-type zinc fingers span residues 63–85, 91–113, 119–141, 147–169, 175–197, 203–225, 231–253, and 259–281; these read HACP…ARTH, FGCT…GRTH, YECP…RRRH, YACA…LRVH, YACP…RRTH, YACA…RRVH, HRCA…ARTH, and YPCA…RRAH.

It belongs to the krueppel C2H2-type zinc-finger protein family.

Its subcellular location is the nucleus. Its function is as follows. May be involved in transcriptional regulation. The protein is Zinc finger protein 771 (ZNF771) of Homo sapiens (Human).